A 1813-amino-acid polypeptide reads, in one-letter code: Sucrase-isomaltase, intestinal (1813 aa).

Residues 1-12 (MARKKSSGLKIT) lie on the Cytoplasmic side of the membrane. Ser-7 carries the post-translational modification Phosphoserine; by PKA. Residues 13–32 (LIVLLAIVTIIAIALVAILP) traverse the membrane as a helical; Signal-anchor for type II membrane protein segment. Topologically, residues 33–1813 (TKTPAVELVS…LDEPIEISWT (1781 aa)) are lumenal. The P-type 1 domain occupies 46 to 95 (GKCPSAENDRLDEKINCIPDQFPTQALCAMQGCCWNPRNESPTPWCSFAN). 3 cysteine pairs are disulfide-bonded: Cys-48–Cys-79, Cys-62–Cys-78, and Cys-73–Cys-91. The isomaltase stretch occupies residues 95–991 (NNHGYEFEKI…DLELNTATAR (897 aa)). A glycan (N-linked (GlcNAc...) asparagine) is linked at Asn-127. Positions 250 and 374 each coordinate substrate. Position 377 is a sulfotyrosine (Tyr-377). A glycan (N-linked (GlcNAc...) asparagine) is linked at Asn-388. Asp-491 serves as the catalytic Nucleophile; for isomaltase activity. A disulfide bridge links Cys-506 with Cys-531. Arg-574 serves as a coordination point for substrate. Asp-590 (for isomaltase activity) is an active-site residue. The cysteines at positions 621 and 632 are disulfide-linked. His-648 serves as a coordination point for substrate. Residues Asn-669, Asn-791, Asn-896, and Asn-911 are each glycosylated (N-linked (GlcNAc...) asparagine). Positions 917–962 (NQVSLDSEKIDCFPDNNPENKQNCEERGCLWEPNSAAEGPRCYFPK) constitute a P-type 2 domain. The tract at residues 992 to 1813 (IKMPSNPISV…LDEPIEISWT (822 aa)) is sucrase. Asn-1221 and Asn-1289 each carry an N-linked (GlcNAc...) asparagine glycan. A Sulfotyrosine modification is found at Tyr-1294. 2 N-linked (GlcNAc...) asparagine glycosylation sites follow: Asn-1326 and Asn-1340. Sulfotyrosine occurs at positions 1368 and 1371. Asp-1380 functions as the Nucleophile; for sucrase activity in the catalytic mechanism. Glu-1383 functions as the For sucrase activity in the catalytic mechanism. Residue Asn-1432 is glycosylated (N-linked (GlcNAc...) asparagine). The active-site Proton donor; for sucrase activity is Asp-1486. 5 N-linked (GlcNAc...) asparagine glycosylation sites follow: Asn-1521, Asn-1545, Asn-1558, Asn-1703, and Asn-1772.

This sequence belongs to the glycosyl hydrolase 31 family. In terms of assembly, the resulting sucrase and isomaltase subunits stay associated with one another in a complex by non-covalent linkages. In terms of processing, the precursor is proteolytically cleaved when exposed to pancreatic proteases in the intestinal lumen. Post-translationally, sulfated.

Its subcellular location is the apical cell membrane. The catalysed reaction is Hydrolysis of sucrose and maltose by an alpha-D-glucosidase-type action.. It catalyses the reaction Hydrolysis of (1-&gt;6)-alpha-D-glucosidic linkages in some oligosaccharides produced from starch and glycogen by alpha-amylase, and in isomaltose.. In terms of biological role, plays an important role in the final stage of carbohydrate digestion. Isomaltase activity is specific for both alpha-1,4- and alpha-1,6-oligosaccharides. The polypeptide is Sucrase-isomaltase, intestinal (SI) (Suncus murinus (Asian house shrew)).